Reading from the N-terminus, the 640-residue chain is Threonine--tRNA ligase (640 aa).

The TGS domain maps to 1–61; the sequence is MPIIALPDGN…EKDSEVNIIT (61 aa). The interval 242-533 is catalytic; sequence DHRRIAKQMS…LIEHYAGRLP (292 aa). C333, H384, and H510 together coordinate Zn(2+).

It belongs to the class-II aminoacyl-tRNA synthetase family. Homodimer. The cofactor is Zn(2+).

The protein resides in the cytoplasm. It carries out the reaction tRNA(Thr) + L-threonine + ATP = L-threonyl-tRNA(Thr) + AMP + diphosphate + H(+). Catalyzes the attachment of threonine to tRNA(Thr) in a two-step reaction: L-threonine is first activated by ATP to form Thr-AMP and then transferred to the acceptor end of tRNA(Thr). Also edits incorrectly charged L-seryl-tRNA(Thr). This Prochlorococcus marinus (strain MIT 9313) protein is Threonine--tRNA ligase.